A 154-amino-acid chain; its full sequence is Protein disulfide-isomerase LQY1, chloroplastic (154 aa).

The transit peptide at 1 to 43 directs the protein to the chloroplast; that stretch reads MPVSAPSPPRLHSPFIHCPINFTPSSFSARNLRSPSTSYPRIK. The chain crosses the membrane as a helical span at residues 51 to 71; it reads VVAISVGVASVALGIGIPVFY. The CR-type zinc finger occupies 77 to 147; the sequence is NAAKRENTQP…SGVQPRYLDR (71 aa). 8 residues coordinate Zn(2+): Cys-87, Cys-90, Cys-98, Cys-101, Cys-121, Cys-124, Cys-132, and Cys-135.

The protein belongs to the BSD2 chaperone family. In terms of assembly, interacts with the photosystem II core subunits. Interacts with HHL1. Requires Zn(2+) as cofactor.

Its subcellular location is the plastid. It is found in the chloroplast thylakoid membrane. It catalyses the reaction Catalyzes the rearrangement of -S-S- bonds in proteins.. Its function is as follows. Protein disulfide-isomerase probably involved upon formation of a complex with HHL1 in maintaining photosystem II (PSII) activity under high light by regulating repair and reassembly of PSII complexes. The polypeptide is Protein disulfide-isomerase LQY1, chloroplastic (Arabidopsis thaliana (Mouse-ear cress)).